A 152-amino-acid chain; its full sequence is Allergen Asp f 15 (152 aa).

The first 19 residues, 1–19 (MKFTTPISLISLFVSSALA), serve as a signal peptide directing secretion. Disulfide bonds link cysteine 53/cysteine 90 and cysteine 93/cysteine 148.

The protein belongs to the cerato-platanin family.

The protein localises to the secreted. The sequence is that of Allergen Asp f 15 from Aspergillus fumigatus (strain ATCC MYA-4609 / CBS 101355 / FGSC A1100 / Af293) (Neosartorya fumigata).